The primary structure comprises 289 residues: ADP-dependent (S)-NAD(P)H-hydrate dehydratase (289 aa).

Residues 9–286 (VTAAALRAQP…PEVPGILDRL (278 aa)) form the YjeF C-terminal domain. The (6S)-NADPHX site is built by Ala-44 and His-160. Residues 197 to 201 (KGADS) and Gly-226 contribute to the AMP site. Asp-227 serves as a coordination point for (6S)-NADPHX.

Belongs to the NnrD/CARKD family. As to quaternary structure, homotetramer. It depends on Mg(2+) as a cofactor.

It carries out the reaction (6S)-NADHX + ADP = AMP + phosphate + NADH + H(+). It catalyses the reaction (6S)-NADPHX + ADP = AMP + phosphate + NADPH + H(+). Its function is as follows. Catalyzes the dehydration of the S-form of NAD(P)HX at the expense of ADP, which is converted to AMP. Together with NAD(P)HX epimerase, which catalyzes the epimerization of the S- and R-forms, the enzyme allows the repair of both epimers of NAD(P)HX, a damaged form of NAD(P)H that is a result of enzymatic or heat-dependent hydration. In Xanthomonas campestris pv. campestris (strain ATCC 33913 / DSM 3586 / NCPPB 528 / LMG 568 / P 25), this protein is ADP-dependent (S)-NAD(P)H-hydrate dehydratase.